The sequence spans 235 residues: Meiotically up-regulated gene 123 protein (235 aa).

Positions 1–14 (MERLATRSSHDDPY) are enriched in basic and acidic residues. Disordered regions lie at residues 1-34 (MERL…SNGS), 58-83 (PLHS…GGMR), and 169-235 (SRAD…FDSD). A compositionally biased stretch (polar residues) spans 15–34 (SRSSLPTSNAINSNHESNGS). Residues 61-77 (SSPSIKSSSQNGKSSSK) show a composition bias toward low complexity. Residues 176–202 (ETTQSDGFESRSGSPTHDIQSYLVNRR) are compositionally biased toward polar residues. A phosphoserine mark is found at Ser-180, Ser-187, and Ser-189. A Phosphothreonine modification is found at Thr-191.

The protein localises to the cytoplasm. Its subcellular location is the nucleus. Functionally, involved in sporulation and has a role in meiosis. The protein is Meiotically up-regulated gene 123 protein (mug123) of Schizosaccharomyces pombe (strain 972 / ATCC 24843) (Fission yeast).